Reading from the N-terminus, the 140-residue chain is Nucleoside diphosphate kinase (140 aa).

Lys11, Phe59, Arg87, Thr93, Arg104, and Asn114 together coordinate ATP. His117 serves as the catalytic Pros-phosphohistidine intermediate.

It belongs to the NDK family. In terms of assembly, homotetramer. It depends on Mg(2+) as a cofactor.

The protein resides in the cytoplasm. The enzyme catalyses a 2'-deoxyribonucleoside 5'-diphosphate + ATP = a 2'-deoxyribonucleoside 5'-triphosphate + ADP. It carries out the reaction a ribonucleoside 5'-diphosphate + ATP = a ribonucleoside 5'-triphosphate + ADP. Its function is as follows. Major role in the synthesis of nucleoside triphosphates other than ATP. The ATP gamma phosphate is transferred to the NDP beta phosphate via a ping-pong mechanism, using a phosphorylated active-site intermediate. The chain is Nucleoside diphosphate kinase from Erythrobacter litoralis (strain HTCC2594).